Here is a 429-residue protein sequence, read N- to C-terminus: Probable M18 family aminopeptidase 2 (429 aa).

The Zn(2+) site is built by histidine 82, histidine 156, and histidine 401.

Belongs to the peptidase M18 family. It depends on Zn(2+) as a cofactor.

In Azotobacter vinelandii (strain DJ / ATCC BAA-1303), this protein is Probable M18 family aminopeptidase 2.